We begin with the raw amino-acid sequence, 126 residues long: NADPH-dependent 7-cyano-7-deazaguanine reductase (126 aa).

The active-site Thioimide intermediate is Cys40. Asp47 (proton donor) is an active-site residue. Substrate contacts are provided by residues 62 to 64 (IEL) and 81 to 82 (HE).

The protein belongs to the GTP cyclohydrolase I family. QueF type 1 subfamily.

It is found in the cytoplasm. It carries out the reaction 7-aminomethyl-7-carbaguanine + 2 NADP(+) = 7-cyano-7-deazaguanine + 2 NADPH + 3 H(+). Its pathway is tRNA modification; tRNA-queuosine biosynthesis. Its function is as follows. Catalyzes the NADPH-dependent reduction of 7-cyano-7-deazaguanine (preQ0) to 7-aminomethyl-7-deazaguanine (preQ1). The polypeptide is NADPH-dependent 7-cyano-7-deazaguanine reductase (Campylobacter jejuni subsp. doylei (strain ATCC BAA-1458 / RM4099 / 269.97)).